The chain runs to 401 residues: Ribosomal RNA dihydrouridine synthase (401 aa).

FAD contacts are provided by alanine 15, aspartate 34, asparagine 35, arginine 41, glycine 47, asparagine 52, valine 132, glutamate 371, and phenylalanine 384.

Belongs to the BaiN/RdsA family. RdsA subfamily. It depends on FAD as a cofactor.

The enzyme catalyses a 5,6-dihydrouridine in mRNA + NAD(+) = a uridine in mRNA + NADH + H(+). In terms of biological role, catalyzes the synthesis of 5,6-dihydrouridine (D) at position 2449 in 23S rRNA. The sequence is that of Ribosomal RNA dihydrouridine synthase from Haemophilus influenzae (strain ATCC 51907 / DSM 11121 / KW20 / Rd).